Here is a 112-residue protein sequence, read N- to C-terminus: Protein ORF3 (112 aa).

Hydrophobic regions lie at residues Ala7–Pro23 and Ala40–Ile60. Residues Val28–His66 form an interaction with host HPX region. A homodimerization, and interaction with host AMBP/bikunin region spans residues Gln70–Arg112. The tract at residues Leu89–Arg112 is disordered. Positions Ser93–Val102 are interaction with host SRC, HCK, FYN, PIK3R3 and GRB2. Residues Pro94–Pro97 carry the PTAP/PSAP motif motif.

Belongs to the hepevirus ORF3 protein family. As to quaternary structure, forms homooligomers. Interacts with host SRC, HCK, FYN, PIK3R3 and GRB2 (via SH3 domain); binding does not activate the kinases. Interacts with host AMBP/bikunin and AMBP/alpha-1-microglobulin peptides. Interacts with host HPX/hemopexin. Interacts (when phosphorylated) with capsid protein ORF2. Interacts with host TSG101; this interaction plays a role in viral release from the host cell. Interacts with host SIRPA; this interaction down-regulates the phosphorylation of host IRF3. In terms of processing, palmitoylated in the N-terminus.

The protein localises to the host endoplasmic reticulum membrane. It localises to the host cytoplasm. The protein resides in the host cytoskeleton. Its subcellular location is the virion. It is found in the host cell membrane. In terms of biological role, small multifunctional phosphoprotein involved in virion morphogenesis, egress and counteracting host innate immunity. Plays critical roles in the final steps of viral release by interacting with host TSG101, a member of the vacuolar protein-sorting pathway and using other cellular host proteins involved in vesicle formation pathway. Also acts as a viroporin and forms ion conductive pores allowing viral particle release. Impairs the generation of type I interferon by down-regulating host TLR3 and TLR7 as well as their downstream signaling pathways. Down-regulates the phosphorylation of host IRF3 via the interaction with host SIRP-alpha, thereby inhibiting IFN-I expression. Interacts with host microtubules. In Bandicota bengalensis (lesser bandicoot rat), this protein is Protein ORF3.